Consider the following 283-residue polypeptide: 3-methyl-2-oxobutanoate hydroxymethyltransferase (283 aa).

2 residues coordinate Mg(2+): aspartate 46 and aspartate 85. 3-methyl-2-oxobutanoate contacts are provided by residues 46–47 (DS), aspartate 85, and lysine 115. Mg(2+) is bound at residue glutamate 117. Catalysis depends on glutamate 184, which acts as the Proton acceptor.

Belongs to the PanB family. In terms of assembly, homodecamer; pentamer of dimers. Mg(2+) is required as a cofactor.

It localises to the cytoplasm. The catalysed reaction is 3-methyl-2-oxobutanoate + (6R)-5,10-methylene-5,6,7,8-tetrahydrofolate + H2O = 2-dehydropantoate + (6S)-5,6,7,8-tetrahydrofolate. Its pathway is cofactor biosynthesis; (R)-pantothenate biosynthesis; (R)-pantoate from 3-methyl-2-oxobutanoate: step 1/2. Functionally, catalyzes the reversible reaction in which hydroxymethyl group from 5,10-methylenetetrahydrofolate is transferred onto alpha-ketoisovalerate to form ketopantoate. This is 3-methyl-2-oxobutanoate hydroxymethyltransferase from Acetivibrio thermocellus (strain ATCC 27405 / DSM 1237 / JCM 9322 / NBRC 103400 / NCIMB 10682 / NRRL B-4536 / VPI 7372) (Clostridium thermocellum).